The sequence spans 358 residues: Probable dual-specificity RNA methyltransferase RlmN 2 (358 aa).

Catalysis depends on E90, which acts as the Proton acceptor. In terms of domain architecture, Radical SAM core spans 96–328 (SGIRRTVCVS…VNTCRYTKGD (233 aa)). A disulfide bond links C103 and C334. C110, C114, and C117 together coordinate [4Fe-4S] cluster. Residues 160-161 (GE), S192, 215-217 (SLH), and N291 each bind S-adenosyl-L-methionine. C334 acts as the S-methylcysteine intermediate in catalysis.

Belongs to the radical SAM superfamily. RlmN family. It depends on [4Fe-4S] cluster as a cofactor.

Its subcellular location is the cytoplasm. The enzyme catalyses adenosine(2503) in 23S rRNA + 2 reduced [2Fe-2S]-[ferredoxin] + 2 S-adenosyl-L-methionine = 2-methyladenosine(2503) in 23S rRNA + 5'-deoxyadenosine + L-methionine + 2 oxidized [2Fe-2S]-[ferredoxin] + S-adenosyl-L-homocysteine. It carries out the reaction adenosine(37) in tRNA + 2 reduced [2Fe-2S]-[ferredoxin] + 2 S-adenosyl-L-methionine = 2-methyladenosine(37) in tRNA + 5'-deoxyadenosine + L-methionine + 2 oxidized [2Fe-2S]-[ferredoxin] + S-adenosyl-L-homocysteine. Its function is as follows. Specifically methylates position 2 of adenine 2503 in 23S rRNA and position 2 of adenine 37 in tRNAs. The chain is Probable dual-specificity RNA methyltransferase RlmN 2 from Protochlamydia amoebophila (strain UWE25).